The following is a 257-amino-acid chain: 3-deoxy-manno-octulosonate cytidylyltransferase (257 aa).

This sequence belongs to the KdsB family.

Its subcellular location is the cytoplasm. The catalysed reaction is 3-deoxy-alpha-D-manno-oct-2-ulosonate + CTP = CMP-3-deoxy-beta-D-manno-octulosonate + diphosphate. It functions in the pathway nucleotide-sugar biosynthesis; CMP-3-deoxy-D-manno-octulosonate biosynthesis; CMP-3-deoxy-D-manno-octulosonate from 3-deoxy-D-manno-octulosonate and CTP: step 1/1. Its pathway is bacterial outer membrane biogenesis; lipopolysaccharide biosynthesis. Its function is as follows. Activates KDO (a required 8-carbon sugar) for incorporation into bacterial lipopolysaccharide in Gram-negative bacteria. The chain is 3-deoxy-manno-octulosonate cytidylyltransferase from Rhodospirillum centenum (strain ATCC 51521 / SW).